Here is a 209-residue protein sequence, read N- to C-terminus: NADH-quinone oxidoreductase subunit C (209 aa).

This sequence belongs to the complex I 30 kDa subunit family. As to quaternary structure, NDH-1 is composed of 14 different subunits. Subunits NuoB, C, D, E, F, and G constitute the peripheral sector of the complex.

The protein localises to the cell inner membrane. It carries out the reaction a quinone + NADH + 5 H(+)(in) = a quinol + NAD(+) + 4 H(+)(out). In terms of biological role, NDH-1 shuttles electrons from NADH, via FMN and iron-sulfur (Fe-S) centers, to quinones in the respiratory chain. The immediate electron acceptor for the enzyme in this species is believed to be ubiquinone. Couples the redox reaction to proton translocation (for every two electrons transferred, four hydrogen ions are translocated across the cytoplasmic membrane), and thus conserves the redox energy in a proton gradient. The chain is NADH-quinone oxidoreductase subunit C from Bordetella petrii (strain ATCC BAA-461 / DSM 12804 / CCUG 43448).